A 129-amino-acid chain; its full sequence is Small ribosomal subunit protein uS11 (129 aa).

It belongs to the universal ribosomal protein uS11 family. Part of the 30S ribosomal subunit. Interacts with proteins S7 and S18. Binds to IF-3.

Its function is as follows. Located on the platform of the 30S subunit, it bridges several disparate RNA helices of the 16S rRNA. Forms part of the Shine-Dalgarno cleft in the 70S ribosome. The sequence is that of Small ribosomal subunit protein uS11 from Beijerinckia indica subsp. indica (strain ATCC 9039 / DSM 1715 / NCIMB 8712).